An 822-amino-acid polypeptide reads, in one-letter code: DNA-directed RNA polymerase subunit beta N-terminal section (822 aa).

The segment at 376–408 is disordered; sequence ELTEGNPSSKSQTKNKTSASKKSKTLNVANTKG. Positions 383–393 are enriched in low complexity; the sequence is SSKSQTKNKTS.

This sequence belongs to the RNA polymerase beta chain family. In terms of assembly, in plastids the minimal PEP RNA polymerase catalytic core is composed of four subunits: alpha, beta, beta', and beta''. When a (nuclear-encoded) sigma factor is associated with the core the holoenzyme is formed, which can initiate transcription.

It is found in the plastid. The protein localises to the chloroplast. It carries out the reaction RNA(n) + a ribonucleoside 5'-triphosphate = RNA(n+1) + diphosphate. Its function is as follows. DNA-dependent RNA polymerase catalyzes the transcription of DNA into RNA using the four ribonucleoside triphosphates as substrates. In Chlamydomonas reinhardtii (Chlamydomonas smithii), this protein is DNA-directed RNA polymerase subunit beta N-terminal section (rpoB1).